The chain runs to 29 residues: U-limacoditoxin(12)-Dv72 (29 aa).

The signal sequence occupies residues 1 to 15 (MNFGMLKLLTVLIIC). Position 27 is an asparagine amide (N27).

This sequence belongs to the limacoditoxin-12 family. As to expression, expressed by the venom secretory cell of the spine. The spine is a cuticular structure containing a single large nucleated venom-secreting cell at its base. It is an independent unit capable of producing, storing and injecting venom. On the back of D.vulnerans caterpillars, spines are grouped together by 50 to 100 to form scoli, of which there are eight in D.vulnerans.

The protein localises to the secreted. Probable toxin. Does not show insecticidal, antimicrobial and antiparasitic activities. Does not induce increase in intracellular calcium in mouse DRG neurons, suggesting that it does not induce pain. The protein is U-limacoditoxin(12)-Dv72 of Doratifera vulnerans (Mottled cup moth).